Here is a 163-residue protein sequence, read N- to C-terminus: Regulatory protein RecX (163 aa).

Residues 1–21 are disordered; the sequence is MSDAEDIPTGRKRRPREQTPV.

Belongs to the RecX family.

It is found in the cytoplasm. Functionally, modulates RecA activity. This is Regulatory protein RecX from Stenotrophomonas maltophilia (strain R551-3).